A 208-amino-acid chain; its full sequence is Uracil phosphoribosyltransferase (208 aa).

5-phospho-alpha-D-ribose 1-diphosphate is bound by residues arginine 78, arginine 103, and aspartate 130 to serine 138. Uracil contacts are provided by residues isoleucine 193 and glycine 198–alanine 200. Aspartate 199 is a binding site for 5-phospho-alpha-D-ribose 1-diphosphate.

It belongs to the UPRTase family. It depends on Mg(2+) as a cofactor.

It carries out the reaction UMP + diphosphate = 5-phospho-alpha-D-ribose 1-diphosphate + uracil. It functions in the pathway pyrimidine metabolism; UMP biosynthesis via salvage pathway; UMP from uracil: step 1/1. Its activity is regulated as follows. Allosterically activated by GTP. Its function is as follows. Catalyzes the conversion of uracil and 5-phospho-alpha-D-ribose 1-diphosphate (PRPP) to UMP and diphosphate. The protein is Uracil phosphoribosyltransferase of Shewanella piezotolerans (strain WP3 / JCM 13877).